A 117-amino-acid polypeptide reads, in one-letter code: uncharacterized protein (117 aa).

Residues 57-77 (LGFPLGLLVFLHSLIVARFFV) form a helical membrane-spanning segment.

It is found in the membrane. This is an uncharacterized protein from Schizosaccharomyces pombe (strain 972 / ATCC 24843) (Fission yeast).